The primary structure comprises 624 residues: Altered inheritance of mitochondria protein 9, mitochondrial (624 aa).

Residues 1–34 constitute a mitochondrion transit peptide; it reads MLSRVARCSRTLNQVTRNGQSGLFSAVLRTSIRQ.

Belongs to the AIM9 family.

Its subcellular location is the mitochondrion. The protein is Altered inheritance of mitochondria protein 9, mitochondrial (AIM9) of Candida albicans (strain WO-1) (Yeast).